A 942-amino-acid chain; its full sequence is MQNKIIIHGARAHNLKNIDVEIPRDKLVVVTGLSGSGKSSLAFDTIYAEGQRRYVESLSAYARQFLGNMEKPDVDSIDGLSPAISIDQKTTSKNPRSTVGTVTEINDYLRLLYARVGTPYCINGHGAITASSAEQIVEQVLALPERTRMQILAPVVRRKKGQHKTVFEKIQKDGYVRVRVDGDIFDVTEVPELSKSKMHNIEVVIDRLVNKDGIRSRLFDSVEAALRLGDGYLMIDTMDGNELLFSEHYSCPVCGFTVPELEPRLFSFNAPFGSCPTCDGLGIKLEVDLDLVVPDPSKSLREGALAPWNPISSNYYPTMLEQAMASFGVDMDTPFEALTEEERDLVLYGSGDREFHFHYVNDFGGERNIDIPFEGVVTNVNRRYHETNSDYTRNVMRGYMNELTCATCHGYRLNDQALCVHVGGEEGTHIGQISELSIADHLQLLEELELTENESTIAKPIVKEIHDRLTFLNNVGLNYLTLSRAAGTLSGGESQRIRLATQIGSNLSGVLYILDEPSIGLHQRDNDRLIESLKKMRDLGNTLIVVEHDEDTMMQADWLIDVGPGAGEFGGEITASGTPKQVAKNKKSITGQYLSGKKFIPVPLERRSGNGRFIEIKGAAQNNLQSLDVRFPLGKFIAVTGVSGSGKSTLVNSILKKAVAQKLNRNADKPGKYHSISGIEHIERLIDIDQSPIGRTPRSNPATYTGVFDDIRDLFAQTNEAKIRGYKKGRFSFNVKGGRCEACSGDGIIKIEMHFLPDVYVPCEVCHGRRYNSETLEVHYKGKNIAEVLDMTVDDALVFFSAIPKIARKIQTIKDVGLGYVTLGQPATTLSGGEAQRMKLASELHKRSTGKSLYILDEPTTGLHTDDIARLLKVLERFVDDGNTVLVIEHNLDVIKSADHIIDLGPEGGDGGGQIVATGTPEEVAQVKESYTGHYLKVKLQQ.

32–39 (GLSGSGKS) contributes to the ATP binding site. The C4-type zinc-finger motif lies at 251 to 278 (CPVCGFTVPELEPRLFSFNAPFGSCPTC). ABC transporter domains lie at 308-589 (WNPI…KKSI) and 609-937 (GNGR…HYLK). 641-648 (GVSGSGKS) is a binding site for ATP. A C4-type zinc finger spans residues 740–766 (CEACSGDGIIKIEMHFLPDVYVPCEVC).

Belongs to the ABC transporter superfamily. UvrA family. In terms of assembly, forms a heterotetramer with UvrB during the search for lesions.

Its subcellular location is the cytoplasm. Its function is as follows. The UvrABC repair system catalyzes the recognition and processing of DNA lesions. UvrA is an ATPase and a DNA-binding protein. A damage recognition complex composed of 2 UvrA and 2 UvrB subunits scans DNA for abnormalities. When the presence of a lesion has been verified by UvrB, the UvrA molecules dissociate. The polypeptide is UvrABC system protein A (Streptococcus pyogenes serotype M1).